Reading from the N-terminus, the 328-residue chain is Beta-ketoacyl-[acyl-carrier-protein] synthase III (328 aa).

Residues Cys122 and His255 contribute to the active site. An ACP-binding region spans residues 256–260; that stretch reads QANVR. Residue Asn285 is part of the active site.

This sequence belongs to the thiolase-like superfamily. FabH family. Homodimer.

The protein localises to the cytoplasm. The catalysed reaction is malonyl-[ACP] + acetyl-CoA + H(+) = 3-oxobutanoyl-[ACP] + CO2 + CoA. It functions in the pathway lipid metabolism; fatty acid biosynthesis. Functionally, catalyzes the condensation reaction of fatty acid synthesis by the addition to an acyl acceptor of two carbons from malonyl-ACP. Catalyzes the first condensation reaction which initiates fatty acid synthesis and may therefore play a role in governing the total rate of fatty acid production. Possesses both acetoacetyl-ACP synthase and acetyl transacylase activities. Its substrate specificity determines the biosynthesis of branched-chain and/or straight-chain of fatty acids. The sequence is that of Beta-ketoacyl-[acyl-carrier-protein] synthase III from Bordetella petrii (strain ATCC BAA-461 / DSM 12804 / CCUG 43448).